An 89-amino-acid polypeptide reads, in one-letter code: Ubiquinol-cytochrome-c reductase complex assembly factor 3 (89 aa).

Residues 1 to 7 (MEAARKA) are Mitochondrial matrix-facing. A helical transmembrane segment spans residues 8–28 (LAVVAVLGAGGGVGSILFALV). Residues 23–80 (ILFALVTPGELQKQLMLQEMPERDSRRRDEAVRTKELVMATLKDAAATKENVAWRRNW) form a mediates lipid-binding region. Topologically, residues 29–89 (TPGELQKQLM…WTVRGDGRSA (61 aa)) are mitochondrial intermembrane.

Belongs to the UQCC3 family. In terms of assembly, associates with the ubiquinol-cytochrome c reductase complex (mitochondrial respiratory chain complex III(CIII) or cytochrome b-c1 complex). Interacts with UQCC1. Forms a complex, named COMC, composed of UQCC1, UQCC2; UQCC3 and UQCC4; mediates MT-CYB hemylation and association with the first nuclear-encoded complex III subunit UQCRQ. In terms of processing, probably cleaved by OMA1 under mitochondrial stress conditions.

The protein localises to the mitochondrion inner membrane. Functionally, required for the assembly of the ubiquinol-cytochrome c reductase complex (mitochondrial respiratory chain complex III or cytochrome b-c1 complex), mediating cytochrome b recruitment and probably stabilization within the complex. Thereby, plays an important role in ATP production by mitochondria. Cardiolipin-binding protein, it may also control the cardiolipin composition of mitochondria membranes and their morphology. The polypeptide is Ubiquinol-cytochrome-c reductase complex assembly factor 3 (Rattus norvegicus (Rat)).